We begin with the raw amino-acid sequence, 463 residues long: Fumarate hydratase class II (463 aa).

Substrate is bound by residues Ser95 to Thr97, His126 to Asp129, Ser136 to Asn138, and Thr184. The Proton donor/acceptor role is filled by His185. Ser315 is an active-site residue. Substrate is bound by residues Ser316 and Lys321–Asn323.

The protein belongs to the class-II fumarase/aspartase family. Fumarase subfamily. Homotetramer.

It is found in the cytoplasm. The enzyme catalyses (S)-malate = fumarate + H2O. Its pathway is carbohydrate metabolism; tricarboxylic acid cycle; (S)-malate from fumarate: step 1/1. Its function is as follows. Involved in the TCA cycle. Catalyzes the stereospecific interconversion of fumarate to L-malate. The chain is Fumarate hydratase class II from Chlamydia trachomatis serovar D (strain ATCC VR-885 / DSM 19411 / UW-3/Cx).